Here is a 120-residue protein sequence, read N- to C-terminus: Ribonuclease P protein component (120 aa).

The protein belongs to the RnpA family. In terms of assembly, consists of a catalytic RNA component (M1 or rnpB) and a protein subunit.

It catalyses the reaction Endonucleolytic cleavage of RNA, removing 5'-extranucleotides from tRNA precursor.. Its function is as follows. RNaseP catalyzes the removal of the 5'-leader sequence from pre-tRNA to produce the mature 5'-terminus. It can also cleave other RNA substrates such as 4.5S RNA. The protein component plays an auxiliary but essential role in vivo by binding to the 5'-leader sequence and broadening the substrate specificity of the ribozyme. This Pseudoalteromonas atlantica (strain T6c / ATCC BAA-1087) protein is Ribonuclease P protein component.